The following is a 190-amino-acid chain: Elongation factor P-like protein (190 aa).

The protein belongs to the elongation factor P family.

This chain is Elongation factor P-like protein, found in Proteus mirabilis (strain HI4320).